The chain runs to 292 residues: Small ribosomal subunit protein uS2 (292 aa).

Residues 265-292 are disordered; sequence TETALDWSDEPVAGDWAAEPAADAQGGW. Residues 277–292 are compositionally biased toward low complexity; the sequence is AGDWAAEPAADAQGGW.

This sequence belongs to the universal ribosomal protein uS2 family. Component of the small ribosomal subunit. Mature ribosomes consist of a small (40S) and a large (60S) subunit. The 40S subunit contains about 33 different proteins and 1 molecule of RNA (18S). The 60S subunit contains about 49 different proteins and 3 molecules of RNA (25S, 5.8S and 5S). Interacts with RPS21.

Its subcellular location is the cytoplasm. Functionally, required for the assembly and/or stability of the 40S ribosomal subunit. Required for the processing of the 20S rRNA-precursor to mature 18S rRNA in a late step of the maturation of 40S ribosomal subunits. In Cryptococcus neoformans var. neoformans serotype D (strain B-3501A) (Filobasidiella neoformans), this protein is Small ribosomal subunit protein uS2.